The sequence spans 195 residues: A-type ATP synthase subunit E (195 aa).

This sequence belongs to the V-ATPase E subunit family. In terms of assembly, has multiple subunits with at least A(3), B(3), C, D, E, F, H, I and proteolipid K(x).

The protein localises to the cell membrane. Its function is as follows. Component of the A-type ATP synthase that produces ATP from ADP in the presence of a proton gradient across the membrane. The polypeptide is A-type ATP synthase subunit E (Halobacterium salinarum (strain ATCC 29341 / DSM 671 / R1)).